A 511-amino-acid polypeptide reads, in one-letter code: Glucans biosynthesis protein G (511 aa).

A signal peptide spans 1 to 22 (MMKMRWLSAAVMLTLYTSSSWA).

The protein belongs to the OpgD/OpgG family.

The protein localises to the periplasm. Its pathway is glycan metabolism; osmoregulated periplasmic glucan (OPG) biosynthesis. In terms of biological role, involved in the biosynthesis of osmoregulated periplasmic glucans (OPGs). The protein is Glucans biosynthesis protein G of Escherichia coli O81 (strain ED1a).